Reading from the N-terminus, the 291-residue chain is Small ribosomal subunit protein uS3 (291 aa).

The KH type-2 domain occupies 39 to 110 (IRLEIMKFLK…KISIKIKEVK (72 aa)).

This sequence belongs to the universal ribosomal protein uS3 family. Part of the 30S ribosomal subunit. Forms a tight complex with proteins S10 and S14.

Binds the lower part of the 30S subunit head. Binds mRNA in the 70S ribosome, positioning it for translation. This chain is Small ribosomal subunit protein uS3, found in Borreliella afzelii (strain PKo) (Borrelia afzelii).